A 265-amino-acid chain; its full sequence is Thiazole synthase (265 aa).

The active-site Schiff-base intermediate with DXP is K106. 1-deoxy-D-xylulose 5-phosphate contacts are provided by residues G167, 193–194, and 215–216; these read AG and NS.

The protein belongs to the ThiG family. In terms of assembly, homotetramer. Forms heterodimers with either ThiH or ThiS.

It is found in the cytoplasm. It carries out the reaction [ThiS sulfur-carrier protein]-C-terminal-Gly-aminoethanethioate + 2-iminoacetate + 1-deoxy-D-xylulose 5-phosphate = [ThiS sulfur-carrier protein]-C-terminal Gly-Gly + 2-[(2R,5Z)-2-carboxy-4-methylthiazol-5(2H)-ylidene]ethyl phosphate + 2 H2O + H(+). The protein operates within cofactor biosynthesis; thiamine diphosphate biosynthesis. Its function is as follows. Catalyzes the rearrangement of 1-deoxy-D-xylulose 5-phosphate (DXP) to produce the thiazole phosphate moiety of thiamine. Sulfur is provided by the thiocarboxylate moiety of the carrier protein ThiS. In vitro, sulfur can be provided by H(2)S. The polypeptide is Thiazole synthase (Prochlorococcus marinus (strain MIT 9515)).